A 590-amino-acid chain; its full sequence is Aspartate--tRNA(Asp/Asn) ligase (590 aa).

Residue E173 participates in L-aspartate binding. Residues 197–200 are aspartate; sequence QIFK. R219 contacts L-aspartate. ATP is bound by residues 219-221 and Q228; that span reads RDE. Position 450 (H450) interacts with L-aspartate. Position 484 (E484) interacts with ATP. Residue R491 coordinates L-aspartate. 536 to 539 contributes to the ATP binding site; the sequence is GLDR.

This sequence belongs to the class-II aminoacyl-tRNA synthetase family. Type 1 subfamily. Homodimer.

It localises to the cytoplasm. The catalysed reaction is tRNA(Asx) + L-aspartate + ATP = L-aspartyl-tRNA(Asx) + AMP + diphosphate. In terms of biological role, aspartyl-tRNA synthetase with relaxed tRNA specificity since it is able to aspartylate not only its cognate tRNA(Asp) but also tRNA(Asn). Reaction proceeds in two steps: L-aspartate is first activated by ATP to form Asp-AMP and then transferred to the acceptor end of tRNA(Asp/Asn). The polypeptide is Aspartate--tRNA(Asp/Asn) ligase (Coxiella burnetii (strain RSA 493 / Nine Mile phase I)).